A 128-amino-acid chain; its full sequence is Glycine cleavage system H protein (128 aa).

Residues 24–106 form the Lipoyl-binding domain; it reads SVTVGITAHA…YGDGWFFKIK (83 aa). Lys-65 carries the post-translational modification N6-lipoyllysine.

This sequence belongs to the GcvH family. In terms of assembly, the glycine cleavage system is composed of four proteins: P, T, L and H. The cofactor is (R)-lipoate.

In terms of biological role, the glycine cleavage system catalyzes the degradation of glycine. The H protein shuttles the methylamine group of glycine from the P protein to the T protein. In Chromobacterium violaceum (strain ATCC 12472 / DSM 30191 / JCM 1249 / CCUG 213 / NBRC 12614 / NCIMB 9131 / NCTC 9757 / MK), this protein is Glycine cleavage system H protein.